The following is a 2458-amino-acid chain: Acetyl-CoA carboxylase 2 (2458 aa).

Position 35 is a phosphoserine (S35). The interval 35–155 (SKSEANLIPS…SPSKEDKKQA (121 aa)) is disordered. The span at 51 to 60 (SDNSGETPQR) shows a compositional bias: polar residues. At T70 the chain carries Phosphothreonine. A compositionally biased stretch (basic and acidic residues) spans 77 to 87 (ASHKGPKDAGR). Phosphoserine is present on residues S91 and S95. Residues 103 to 146 (PLSSSDAAPSPELQANGTGTQGLEATDTNGLSSSARPQGQQAGS) are compositionally biased toward polar residues. Residues S169, S175, S192, S195, and S200 each carry the phosphoserine modification. The disordered stretch occupies residues 174–193 (SSDEDSVAGSSRESTRKGSR). T207 is modified (phosphothreonine). S220 bears the Phosphoserine mark. S222 carries the phosphoserine; by AMPK modification. The 503-residue stretch at 259–761 (VIEKVLIANN…DTGWLDYLIA (503 aa)) folds into the Biotin carboxylation domain. Residues 414–609 (DDLQQGKRIS…LPAAQLQIAM (196 aa)) enclose the ATP-grasp domain. ATP is bound at residue 458–463 (GGGGKG). S469 carries the phosphoserine modification. The Mg(2+) site is built by E567, E580, and N582. 3 residues coordinate Mn(2+): E567, E580, and N582. The active site involves R584. T753 is modified (phosphothreonine). The Biotinyl-binding domain occupies 888–962 (FEKENDPTVL…EAGCVVARLE (75 aa)). Residue K929 is modified to N6-biotinyllysine. S1340 carries the phosphoserine modification. Position 1342 is a phosphothreonine (T1342). S1360 and S1405 each carry phosphoserine. Positions 1695–2025 (PYVTKDLLQA…DNHSPVPIIT (331 aa)) constitute a CoA carboxyltransferase N-terminal domain. The tract at residues 1695 to 2345 (PYVTKDLLQA…EDQVKQEILQ (651 aa)) is carboxyltransferase. CoA contacts are provided by R1934, K2238, and R2240. The 317-residue stretch at 2029–2345 (PIDREIEFLP…EDQVKQEILQ (317 aa)) folds into the CoA carboxyltransferase C-terminal domain.

In terms of assembly, monomer, homodimer, and homotetramer. Forms filamentous polymers. Interacts with MID1IP1; interaction with MID1IP1 promotes oligomerization and increases its activity in a citrate-dependent manner. Biotin serves as cofactor. Requires Mg(2+) as cofactor. Mn(2+) is required as a cofactor. In terms of processing, the biotin cofactor is covalently attached to the central biotinyl-binding domain and is required for the catalytic activity. Phosphorylation at Ser-222 by AMPK inactivates the enzyme. Required for the maintenance of skeletal muscle lipid and glucose homeostasis. In terms of tissue distribution, widely expressed with highest levels in heart, skeletal muscle, liver, adipose tissue, mammary gland, adrenal gland and colon. Isoform 3 is expressed in skeletal muscle, adipose tissue and liver (at protein level). Isoform 3 is detected at high levels in adipose tissue with lower levels in heart, liver, skeletal muscle and testis.

The protein localises to the mitochondrion. It catalyses the reaction hydrogencarbonate + acetyl-CoA + ATP = malonyl-CoA + ADP + phosphate + H(+). Its pathway is lipid metabolism; malonyl-CoA biosynthesis; malonyl-CoA from acetyl-CoA: step 1/1. Its activity is regulated as follows. Activity is increased by oligomerization of the protein into filaments. The oligomerization and the activity of the enzyme are inhibited by phosphorylation at Ser-222. Inhibited by its product, malonyl-CoA. Activated by citrate. Activation by MID1IP1 is citrate-dependent. Soraphen A, inhibits the enzyme by preventing the formation of active filamentous oligomers. Functionally, mitochondrial enzyme that catalyzes the carboxylation of acetyl-CoA to malonyl-CoA and plays a central role in fatty acid metabolism. Catalyzes a 2 steps reaction starting with the ATP-dependent carboxylation of the biotin carried by the biotin carboxyl carrier (BCC) domain followed by the transfer of the carboxyl group from carboxylated biotin to acetyl-CoA. Through the production of malonyl-CoA that allosterically inhibits carnitine palmitoyltransferase 1 at the mitochondria, negatively regulates fatty acid oxidation. Together with its cytosolic isozyme ACACA, which is involved in de novo fatty acid biosynthesis, promotes lipid storage. The chain is Acetyl-CoA carboxylase 2 from Homo sapiens (Human).